Here is a 349-residue protein sequence, read N- to C-terminus: Probable L-asparaginase periplasmic (349 aa).

The first 21 residues, 1-21 (MKLTKLALCTLFGLGVSIANA), serve as a signal peptide directing secretion. The region spanning 25–349 (PNITILATGG…KVIQQYFEDF (325 aa)) is the Asparaginase/glutaminase domain. The active-site O-isoaspartyl threonine intermediate is the T35. Substrate contacts are provided by residues S81 and 112-113 (TD). Cysteines 100 and 128 form a disulfide.

This sequence belongs to the asparaginase 1 family.

Its subcellular location is the periplasm. The catalysed reaction is L-asparagine + H2O = L-aspartate + NH4(+). In Haemophilus influenzae (strain ATCC 51907 / DSM 11121 / KW20 / Rd), this protein is Probable L-asparaginase periplasmic (ansB).